The sequence spans 466 residues: Cytochrome c-552 (466 aa).

The signal sequence occupies residues 1–27 (MVRILTKKSFALSALVAASLMASGAMA). His-87 serves as a coordination point for heme c. Positions 115, 118, and 119 each coordinate heme. Cys-153, Cys-156, His-157, Cys-195, Cys-198, and His-199 together coordinate heme c. 4 residues coordinate Ca(2+): Glu-201, Tyr-202, Lys-250, and Gln-252. Tyr-202 serves as a coordination point for substrate. His-253 serves as a coordination point for substrate. The heme c site is built by His-264, Cys-271, Cys-274, His-275, His-290, Cys-303, Cys-306, His-307, and His-382.

The protein belongs to the cytochrome c-552 family. The cofactor is Ca(2+). Requires heme c as cofactor.

It is found in the periplasm. The enzyme catalyses 6 Fe(III)-[cytochrome c] + NH4(+) + 2 H2O = 6 Fe(II)-[cytochrome c] + nitrite + 8 H(+). The protein operates within nitrogen metabolism; nitrate reduction (assimilation). Catalyzes the reduction of nitrite to ammonia, consuming six electrons in the process. The sequence is that of Cytochrome c-552 from Shewanella woodyi (strain ATCC 51908 / MS32).